The primary structure comprises 258 residues: Triosephosphate isomerase (258 aa).

11–13 serves as a coordination point for substrate; sequence NWK. The Electrophile role is filled by His-101. Residue Glu-173 is the Proton acceptor of the active site. Substrate contacts are provided by residues Gly-179, Ser-219, and 240–241; that span reads GG.

This sequence belongs to the triosephosphate isomerase family. In terms of assembly, homodimer.

It localises to the cytoplasm. It carries out the reaction D-glyceraldehyde 3-phosphate = dihydroxyacetone phosphate. It participates in carbohydrate biosynthesis; gluconeogenesis. Its pathway is carbohydrate degradation; glycolysis; D-glyceraldehyde 3-phosphate from glycerone phosphate: step 1/1. In terms of biological role, involved in the gluconeogenesis. Catalyzes stereospecifically the conversion of dihydroxyacetone phosphate (DHAP) to D-glyceraldehyde-3-phosphate (G3P). In Streptomyces avermitilis (strain ATCC 31267 / DSM 46492 / JCM 5070 / NBRC 14893 / NCIMB 12804 / NRRL 8165 / MA-4680), this protein is Triosephosphate isomerase.